A 391-amino-acid polypeptide reads, in one-letter code: Glycosyltransferase afumC (391 aa).

The protein belongs to the afumC glycosyltransferase family.

It participates in secondary metabolite biosynthesis. Activity is significantly decreased by addition of divalent cations such as Mg(2+), Mn(2+), Zn(2+), Ca(2+), Co(2+), Cu(2+), and Ni(2+); while Fe(2+) has little effect. In terms of biological role, glycosyltransferase; part of the gene cluster that mediates the biosynthesis fumihopaside A, a hopane-type glucoside that enhances the thermotolerance and UV resistance of N.fumigata. The first step of fumihopaside A biosynthesis is performed by the squalene hopane cyclase afumA that catalyzes the cyclization of 3S-oxidosqualene into the hopene 21-beta-H-hopane-3-beta,22-diol. The cytochrome P450 monooxygenase afumB is responsible for both hydroxylation at C-24 and oxidations at C-30 of the afumA product. The glycosyltransferase afumC then catalyzes the glycosylation at C-24, using UDP-D-glucose as a donor, to produce fumihopaside A. AfumC is also able to accept UDP-D-galactose and UDP-D-glucuronic acid as donors to yield minor derivatives. Fumihopaside B, another minor derivative produced, is different from fumihopaside A due to the presence of a double bond between C-22 and C-29. In Aspergillus fumigatus (strain CBS 144.89 / FGSC A1163 / CEA10) (Neosartorya fumigata), this protein is Glycosyltransferase afumC.